A 377-amino-acid polypeptide reads, in one-letter code: 4-hydroxy-tetrahydrodipicolinate synthase 2, chloroplastic (377 aa).

Residues 1 to 51 (MMAAQPTANPGVRLGWKAPGALASPPRLALSRSAAAPLASHRVGRGKFSAA) constitute a chloroplast transit peptide. Position 120 (threonine 120) interacts with pyruvate. The active-site Proton donor/acceptor is the tyrosine 206. Catalysis depends on lysine 234, which acts as the Schiff-base intermediate with substrate. Isoleucine 273 provides a ligand contact to pyruvate.

This sequence belongs to the DapA family. Tetramer of modified subunits derived from two genes in different combinations.

The protein resides in the plastid. Its subcellular location is the chloroplast. The enzyme catalyses L-aspartate 4-semialdehyde + pyruvate = (2S,4S)-4-hydroxy-2,3,4,5-tetrahydrodipicolinate + H2O + H(+). It participates in amino-acid biosynthesis; L-lysine biosynthesis via DAP pathway; (S)-tetrahydrodipicolinate from L-aspartate: step 3/4. Sensitive to lysine inhibition. This inhibition increase in an allosteric manner with increasing concentration of the inhibitor. Functionally, catalyzes the condensation of (S)-aspartate-beta-semialdehyde [(S)-ASA] and pyruvate to 4-hydroxy-tetrahydrodipicolinate (HTPA). This is 4-hydroxy-tetrahydrodipicolinate synthase 2, chloroplastic from Triticum aestivum (Wheat).